The sequence spans 394 residues: Argininosuccinate synthase (394 aa).

ATP contacts are provided by residues 7 to 15 (AYSGGLDTS) and A34. Residues Y85 and S90 each contribute to the L-citrulline site. G115 contacts ATP. Positions 117, 121, and 122 each coordinate L-aspartate. An L-citrulline-binding site is contributed by N121. L-citrulline is bound by residues R125, S176, S185, E261, and Y273.

This sequence belongs to the argininosuccinate synthase family. Type 1 subfamily. Homotetramer.

The protein localises to the cytoplasm. It catalyses the reaction L-citrulline + L-aspartate + ATP = 2-(N(omega)-L-arginino)succinate + AMP + diphosphate + H(+). The protein operates within amino-acid biosynthesis; L-arginine biosynthesis; L-arginine from L-ornithine and carbamoyl phosphate: step 2/3. In Ehrlichia ruminantium (strain Gardel), this protein is Argininosuccinate synthase.